A 332-amino-acid polypeptide reads, in one-letter code: Galactosylgalactosylxylosylprotein 3-beta-glucuronosyltransferase 1 (332 aa).

The Cytoplasmic portion of the chain corresponds to 1 to 6 (MPKRRD). The interval 3 to 5 (KRR) is essential for transport from endoplasmic reticulum to Golgi apparatus and interaction with SAR1A. Residues 7–27 (ILAIVLIVLPWTLLITVWHQS) form a helical; Signal-anchor for type II membrane protein membrane-spanning segment. Residues 28–332 (TLAPLLAVHK…KGFTDPSVEI (305 aa)) are Lumenal-facing. 91 to 93 (PTY) is a UDP-alpha-D-glucuronate binding site. Phosphothreonine occurs at positions 103 and 108. D122 is a UDP-alpha-D-glucuronate binding site. The N-linked (GlcNAc...) asparagine glycan is linked to N140. The UDP-alpha-D-glucuronate site is built by R165 and R170. N184 is a glycosylation site (N-linked (GlcNAc...) asparagine). Residue 195–197 (DDD) coordinates UDP-alpha-D-glucuronate. Mn(2+) is bound at residue D197. Residues 243–252 (FDPHRPFAID) form an interaction with galactose moiety of substrate glycoprotein region. The Proton donor/acceptor role is filled by E282. N301 is a glycosylation site (N-linked (GlcNAc...) asparagine). Residue 309-311 (HTR) coordinates UDP-alpha-D-glucuronate.

It belongs to the glycosyltransferase 43 family. Homodimer. Interacts with SAR1A. The cofactor is Mn(2+). The soluble form derives from the membrane form by proteolytic processing.

The protein resides in the golgi apparatus membrane. It localises to the secreted. It carries out the reaction 3-O-(beta-D-galactosyl-(1-&gt;3)-beta-D-galactosyl-(1-&gt;4)-beta-D-xylosyl)-L-seryl-[protein] + UDP-alpha-D-glucuronate = 3-O-(beta-D-GlcA-(1-&gt;3)-beta-D-Gal-(1-&gt;3)-beta-D-Gal-(1-&gt;4)-beta-D-Xyl)-L-seryl-[protein] + UDP + H(+). It participates in protein modification; protein glycosylation. In terms of biological role, involved in the biosynthesis of L2/HNK-1 carbohydrate epitope on glycoproteins. Can also play a role in glycosaminoglycan biosynthesis. Substrates include asialo-orosomucoid (ASOR), asialo-fetuin, and asialo-neural cell adhesion molecule. Requires sphingomyelin for activity: stearoyl-sphingomyelin was the most effective, followed by palmitoyl-sphingomyelin and lignoceroyl-sphingomyelin. Activity was demonstrated only for sphingomyelin with a saturated fatty acid and not for that with an unsaturated fatty acid, regardless of the length of the acyl group. This chain is Galactosylgalactosylxylosylprotein 3-beta-glucuronosyltransferase 1, found in Pan troglodytes (Chimpanzee).